Reading from the N-terminus, the 181-residue chain is Sporozoite-associated mosquito saliva protein 1 (181 aa).

The signal sequence occupies residues 1–24; the sequence is MNSSWRVVVFLGLVILCHSRRARA.

As to expression, salivary gland (at protein level). In terms of tissue distribution, (Microbial infection) Detected with Plasmodium berghei sporozoites isolated from the saliva of infected Anopheles gambiae mosquitoes (at protein level).

It localises to the secreted. Functionally, decreases host neutrophil chemotaxis induced by N-formylmethionine-leucyl-phenylalanine (fMLP). In terms of biological role, (Microbial infection) Interacts with the surface of Plasmodium berghei sporozoites. Enhances sporozoite gliding activity. Enhances host hepatocyte traversal by sporozoites. The chain is Sporozoite-associated mosquito saliva protein 1 from Anopheles gambiae (African malaria mosquito).